Here is a 363-residue protein sequence, read N- to C-terminus: Dual-specificity RNA methyltransferase RlmN (363 aa).

The Proton acceptor role is filled by glutamate 102. Residues 108-349 (EKKRATLCVS…KNRGQDIGAA (242 aa)) enclose the Radical SAM core domain. Cysteine 115 and cysteine 350 form a disulfide bridge. Residues cysteine 122, cysteine 126, and cysteine 129 each coordinate [4Fe-4S] cluster. Residues 174 to 175 (GE), serine 206, 228 to 230 (SLH), and asparagine 307 contribute to the S-adenosyl-L-methionine site. The S-methylcysteine intermediate role is filled by cysteine 350.

The protein belongs to the radical SAM superfamily. RlmN family. It depends on [4Fe-4S] cluster as a cofactor.

It is found in the cytoplasm. The enzyme catalyses adenosine(2503) in 23S rRNA + 2 reduced [2Fe-2S]-[ferredoxin] + 2 S-adenosyl-L-methionine = 2-methyladenosine(2503) in 23S rRNA + 5'-deoxyadenosine + L-methionine + 2 oxidized [2Fe-2S]-[ferredoxin] + S-adenosyl-L-homocysteine. The catalysed reaction is adenosine(37) in tRNA + 2 reduced [2Fe-2S]-[ferredoxin] + 2 S-adenosyl-L-methionine = 2-methyladenosine(37) in tRNA + 5'-deoxyadenosine + L-methionine + 2 oxidized [2Fe-2S]-[ferredoxin] + S-adenosyl-L-homocysteine. Functionally, specifically methylates position 2 of adenine 2503 in 23S rRNA and position 2 of adenine 37 in tRNAs. m2A2503 modification seems to play a crucial role in the proofreading step occurring at the peptidyl transferase center and thus would serve to optimize ribosomal fidelity. The polypeptide is Dual-specificity RNA methyltransferase RlmN (Buchnera aphidicola subsp. Schizaphis graminum (strain Sg)).